Reading from the N-terminus, the 173-residue chain is Ribulose bisphosphate carboxylase small subunit, chloroplastic 2 (173 aa).

Residues 1-33 (VVLSKECAKPLATPKVTLNKRGFATTIATKNRE) constitute a chloroplast transit peptide.

The protein belongs to the RuBisCO small chain family. As to quaternary structure, heterohexadecamer of 8 large and 8 small subunits.

It is found in the plastid. The protein resides in the chloroplast. RuBisCO catalyzes two reactions: the carboxylation of D-ribulose 1,5-bisphosphate, the primary event in carbon dioxide fixation, as well as the oxidative fragmentation of the pentose substrate. Both reactions occur simultaneously and in competition at the same active site. Although the small subunit is not catalytic it is essential for maximal activity. The polypeptide is Ribulose bisphosphate carboxylase small subunit, chloroplastic 2 (Acetabularia acetabulum (Mermaid's wine glass)).